Here is an 87-residue protein sequence, read N- to C-terminus: Sec-independent protein translocase protein TatA (87 aa).

Residues 1–21 (MGSFSITHWLILLVVVVVVFG) traverse the membrane as a helical segment. The tract at residues 56–87 (VLDHDAGTNPPNITGTQSDTTSANKVDDTHNV) is disordered. Positions 64 to 79 (NPPNITGTQSDTTSAN) are enriched in polar residues.

The protein belongs to the TatA/E family. As to quaternary structure, the Tat system comprises two distinct complexes: a TatABC complex, containing multiple copies of TatA, TatB and TatC subunits, and a separate TatA complex, containing only TatA subunits. Substrates initially bind to the TatABC complex, which probably triggers association of the separate TatA complex to form the active translocon.

The protein resides in the cell inner membrane. Its function is as follows. Part of the twin-arginine translocation (Tat) system that transports large folded proteins containing a characteristic twin-arginine motif in their signal peptide across membranes. TatA could form the protein-conducting channel of the Tat system. This is Sec-independent protein translocase protein TatA from Psychrobacter arcticus (strain DSM 17307 / VKM B-2377 / 273-4).